The sequence spans 199 residues: ATP-dependent Clp protease proteolytic subunit 2 (199 aa).

Ser-95 functions as the Nucleophile in the catalytic mechanism. His-120 is a catalytic residue.

This sequence belongs to the peptidase S14 family. As to quaternary structure, fourteen ClpP subunits assemble into 2 heptameric rings which stack back to back to give a disk-like structure with a central cavity, resembling the structure of eukaryotic proteasomes.

The protein localises to the cytoplasm. It carries out the reaction Hydrolysis of proteins to small peptides in the presence of ATP and magnesium. alpha-casein is the usual test substrate. In the absence of ATP, only oligopeptides shorter than five residues are hydrolyzed (such as succinyl-Leu-Tyr-|-NHMec, and Leu-Tyr-Leu-|-Tyr-Trp, in which cleavage of the -Tyr-|-Leu- and -Tyr-|-Trp bonds also occurs).. Cleaves peptides in various proteins in a process that requires ATP hydrolysis. Has a chymotrypsin-like activity. Plays a major role in the degradation of misfolded proteins. This is ATP-dependent Clp protease proteolytic subunit 2 from Mycolicibacterium paratuberculosis (strain ATCC BAA-968 / K-10) (Mycobacterium paratuberculosis).